A 313-amino-acid polypeptide reads, in one-letter code: Porphobilinogen deaminase (313 aa).

The residue at position 242 (cysteine 242) is an S-(dipyrrolylmethanemethyl)cysteine.

Belongs to the HMBS family. As to quaternary structure, monomer. It depends on dipyrromethane as a cofactor.

The enzyme catalyses 4 porphobilinogen + H2O = hydroxymethylbilane + 4 NH4(+). Its pathway is porphyrin-containing compound metabolism; protoporphyrin-IX biosynthesis; coproporphyrinogen-III from 5-aminolevulinate: step 2/4. In terms of biological role, tetrapolymerization of the monopyrrole PBG into the hydroxymethylbilane pre-uroporphyrinogen in several discrete steps. The polypeptide is Porphobilinogen deaminase (Pseudomonas putida (strain GB-1)).